The sequence spans 636 residues: ATP-dependent zinc metalloprotease FtsH (636 aa).

Over 1 to 12 the chain is Cytoplasmic; it reads MKKLLENLSLWM. The helical transmembrane segment at 13–33 threads the bilayer; the sequence is GIIILVTLLFGQVALNFGFGI. At 34-104 the chain is on the periplasmic side; that stretch reads RNEKIQFSEF…VASGDSFLGL (71 aa). The chain crosses the membrane as a helical span at residues 105–125; it reads LFNILISWFPMLLLIGVWIFF. Residues 126–636 are Cytoplasmic-facing; it reads MKQMQAGGNK…ESDLDTGDKE (511 aa). Residue 197–204 participates in ATP binding; the sequence is GPPGTGKT. Residue histidine 419 coordinates Zn(2+). Glutamate 420 is an active-site residue. The Zn(2+) site is built by histidine 423 and aspartate 497.

This sequence in the central section; belongs to the AAA ATPase family. The protein in the C-terminal section; belongs to the peptidase M41 family. In terms of assembly, homohexamer. The cofactor is Zn(2+).

Its subcellular location is the cell inner membrane. Functionally, acts as a processive, ATP-dependent zinc metallopeptidase for both cytoplasmic and membrane proteins. Plays a role in the quality control of integral membrane proteins. This chain is ATP-dependent zinc metalloprotease FtsH, found in Neorickettsia risticii (strain Illinois).